Consider the following 37-residue polypeptide: NADH dehydrogenase [ubiquinone] 1 alpha subcomplex subunit 5 (37 aa).

Belongs to the complex I NDUFA5 subunit family. Complex I is composed of about 45 different subunits.

It is found in the mitochondrion inner membrane. In terms of biological role, accessory subunit of the mitochondrial membrane respiratory chain NADH dehydrogenase (Complex I), that is believed not to be involved in catalysis. Complex I functions in the transfer of electrons from NADH to the respiratory chain. The immediate electron acceptor for the enzyme is believed to be ubiquinone. This is NADH dehydrogenase [ubiquinone] 1 alpha subcomplex subunit 5 from Solanum tuberosum (Potato).